Here is a 274-residue protein sequence, read N- to C-terminus: Dehydration-responsive element-binding protein 2A (274 aa).

2 stretches are compositionally biased toward basic and acidic residues: residues 1–10 and 35–50; these read MERGEGRRGD and KWWK…ENSS. The tract at residues 1–75 is disordered; the sequence is MERGEGRRGD…KGGPENSNCA (75 aa). The AP2/ERF DNA-binding region spans 75-132; sequence AYRGVRQRTWGKWVAEIREPNRGRRLWLGSFPTALEAAHAYDEAARAMYGPTARVNFA.

The protein belongs to the AP2/ERF transcription factor family. ERF subfamily.

Its subcellular location is the nucleus. Functionally, transcriptional activator that binds specifically to the DNA sequence 5'-[AG]CCGAC-3'. Binding to the C-repeat/DRE element mediates high salinity- and dehydration-inducible transcription. The sequence is that of Dehydration-responsive element-binding protein 2A (DREB2A) from Oryza sativa subsp. indica (Rice).